A 378-amino-acid polypeptide reads, in one-letter code: Alanine racemase (378 aa).

Lys35 (proton acceptor; specific for D-alanine) is an active-site residue. Lys35 is subject to N6-(pyridoxal phosphate)lysine. A substrate-binding site is contributed by Arg133. The active-site Proton acceptor; specific for L-alanine is Tyr266. A substrate-binding site is contributed by Met314.

It belongs to the alanine racemase family. Requires pyridoxal 5'-phosphate as cofactor.

The catalysed reaction is L-alanine = D-alanine. Its pathway is amino-acid biosynthesis; D-alanine biosynthesis; D-alanine from L-alanine: step 1/1. In terms of biological role, catalyzes the interconversion of L-alanine and D-alanine. May also act on other amino acids. In Beutenbergia cavernae (strain ATCC BAA-8 / DSM 12333 / CCUG 43141 / JCM 11478 / NBRC 16432 / NCIMB 13614 / HKI 0122), this protein is Alanine racemase (alr).